We begin with the raw amino-acid sequence, 88 residues long: Small ribosomal subunit protein bS20 (88 aa).

The protein belongs to the bacterial ribosomal protein bS20 family.

Its function is as follows. Binds directly to 16S ribosomal RNA. This is Small ribosomal subunit protein bS20 from Clostridium kluyveri (strain NBRC 12016).